The following is a 538-amino-acid chain: uncharacterized protein (538 aa).

An N-terminal signal peptide occupies residues 1–17; sequence MSFSATILFSPPSGSEA. A disordered region spans residues 101–131; the sequence is RQGKVSIPDEDGESRAHSSPPEEPGPLKESP. Residues Lys-128 and Lys-221 each participate in a glycyl lysine isopeptide (Lys-Gly) (interchain with G-Cter in SUMO2) cross-link. Ser-224 carries the post-translational modification Phosphoserine. The segment at 233–253 is disordered; the sequence is RATPETGPENGTKLPPPRPED. Phosphoserine occurs at positions 285 and 428. The tract at residues 488–523 is disordered; sequence LPPELYNPNFQEEEDEGGDENAPGSPSFDQPHKTCC.

It localises to the secreted. This is an uncharacterized protein from Homo sapiens (Human).